Here is a 1153-residue protein sequence, read N- to C-terminus: uncharacterized protein (1153 aa).

The first 18 residues, 1 to 18 (MNKNIFITLLISLLLLSG), serve as a signal peptide directing secretion. C19 is lipidated: N-palmitoyl cysteine. C19 is lipidated: S-diacylglycerol cysteine. 4 helical membrane passes run 289–309 (VSAI…IGNI), 393–413 (LGFI…FLIF), 422–442 (ALIT…FMLF), and 457–477 (ISYA…SMII).

This sequence belongs to the TrbL/VirB6 family.

The protein localises to the cell membrane. This is an uncharacterized protein from Rickettsia conorii (strain ATCC VR-613 / Malish 7).